The following is a 240-amino-acid chain: Splicing factor rtf2 (240 aa).

2 disordered regions span residues 1-22 (MGNDGGSLPTRNELVKEPGKVP) and 181-240 (SLNK…RVKI). Positions 185–210 (ASKKSNKNGDKKRKHVSKSNSKHAKH) are enriched in basic residues. Composition is skewed to basic and acidic residues over residues 211-224 (ELRTNRMLDGENVK) and 231-240 (DMERVKRVKI).

It belongs to the rtf2 family. As to quaternary structure, interacts with pcn1.

Its subcellular location is the nucleus. Its function is as follows. Putative splicing factor that is required for the correct splicing of a subset of pre-mRNAs. Required for the correct splicing of rtf1, a replication termination factor that mediates site-specific replication termination at replication barrier RTS1. The sequence is that of Splicing factor rtf2 from Schizosaccharomyces pombe (strain 972 / ATCC 24843) (Fission yeast).